The sequence spans 432 residues: Adenylosuccinate synthetase (432 aa).

Residues 13–19 (GDEGKGK) and 41–43 (GHT) each bind GTP. The Proton acceptor role is filled by D14. Mg(2+)-binding residues include D14 and G41. IMP-binding positions include 14 to 17 (DEGK), 39 to 42 (NAGH), T130, R144, Q225, T240, and R304. The Proton donor role is filled by H42. 300 to 306 (ATTGRKR) serves as a coordination point for substrate. GTP contacts are provided by residues R306, 332-334 (KLD), and 415-417 (STG).

It belongs to the adenylosuccinate synthetase family. Homodimer. Mg(2+) is required as a cofactor.

It localises to the cytoplasm. It catalyses the reaction IMP + L-aspartate + GTP = N(6)-(1,2-dicarboxyethyl)-AMP + GDP + phosphate + 2 H(+). It participates in purine metabolism; AMP biosynthesis via de novo pathway; AMP from IMP: step 1/2. Plays an important role in the de novo pathway of purine nucleotide biosynthesis. Catalyzes the first committed step in the biosynthesis of AMP from IMP. The polypeptide is Adenylosuccinate synthetase (Pseudoalteromonas atlantica (strain T6c / ATCC BAA-1087)).